The chain runs to 314 residues: 2-oxo-3-(phosphooxy)propyl 3-oxoalkanoate synthase (314 aa).

This sequence belongs to the AfsA family.

It catalyses the reaction a medium-chain 3-oxoacyl-[ACP] + dihydroxyacetone phosphate = a (4-alkanoyl-5-oxo-2,5-dihydrofuran-3-yl)methyl phosphate + holo-[ACP] + H2O. In terms of biological role, involved of the biosynthesis of S.coelicolor butanolide 1 (SCB1), a gamma-butyrolactone that triggers antibiotic production. In Streptomyces coelicolor (strain ATCC BAA-471 / A3(2) / M145), this protein is 2-oxo-3-(phosphooxy)propyl 3-oxoalkanoate synthase.